Consider the following 190-residue polypeptide: Prostaglandin-H2 D-isomerase (190 aa).

A signal peptide spans 1–22; sequence MATHHTLWMGLVLLGLLGGLQA. N-linked (GlcNAc...) asparagine glycosylation occurs at Asn51. Cys65 acts as the Nucleophile in catalysis. Asn78 carries an N-linked (GlcNAc...) asparagine glycan. The cysteines at positions 89 and 186 are disulfide-linked.

Belongs to the calycin superfamily. Lipocalin family. As to quaternary structure, monomer.

Its subcellular location is the rough endoplasmic reticulum. It is found in the nucleus membrane. The protein localises to the golgi apparatus. The protein resides in the cytoplasm. It localises to the perinuclear region. Its subcellular location is the secreted. The catalysed reaction is prostaglandin H2 = prostaglandin D2. Catalyzes the conversion of PGH2 to PGD2, a prostaglandin involved in smooth muscle contraction/relaxation and a potent inhibitor of platelet aggregation. Involved in a variety of CNS functions, such as sedation, NREM sleep and PGE2-induced allodynia, and may have an anti-apoptotic role in oligodendrocytes. Binds small non-substrate lipophilic molecules, including biliverdin, bilirubin, retinal, retinoic acid and thyroid hormone, and may act as a scavenger for harmful hydrophobic molecules and as a secretory retinoid and thyroid hormone transporter. Possibly involved in development and maintenance of the blood-brain, blood-retina, blood-aqueous humor and blood-testis barrier. It is likely to play important roles in both maturation and maintenance of the central nervous system and male reproductive system. Involved in PLA2G3-dependent maturation of mast cells. PLA2G3 is secreted by immature mast cells and acts on nearby fibroblasts upstream to PTDGS to synthesize PGD2, which in turn promotes mast cell maturation and degranulation via PTGDR. The sequence is that of Prostaglandin-H2 D-isomerase (PTGDS) from Macaca fuscata fuscata (Japanese macaque).